Consider the following 139-residue polypeptide: Protocatechuate 4,5-dioxygenase alpha chain (139 aa).

As to quaternary structure, composed of two subunits (alpha and beta) in a 1:1 ratio. The cofactor is Fe(2+).

The catalysed reaction is 3,4-dihydroxybenzoate + O2 = 4-carboxy-2-hydroxy-cis,cis-muconate 6-semialdehyde + H(+). In terms of biological role, responsible for the aromatic ring fission of protocatechuate. This chain is Protocatechuate 4,5-dioxygenase alpha chain (ligA), found in Sphingobium sp. (strain NBRC 103272 / SYK-6).